The following is a 130-amino-acid chain: Large ribosomal subunit protein bL12 (130 aa).

This sequence belongs to the bacterial ribosomal protein bL12 family. In terms of assembly, homodimer. Part of the ribosomal stalk of the 50S ribosomal subunit. Forms a multimeric L10(L12)X complex, where L10 forms an elongated spine to which 2 to 4 L12 dimers bind in a sequential fashion. Binds GTP-bound translation factors.

In terms of biological role, forms part of the ribosomal stalk which helps the ribosome interact with GTP-bound translation factors. Is thus essential for accurate translation. The chain is Large ribosomal subunit protein bL12 from Prochlorococcus marinus (strain SARG / CCMP1375 / SS120).